Here is a 277-residue protein sequence, read N- to C-terminus: Large ribosomal subunit protein uL2 (277 aa).

Residues 222–277 (GVAMNPVDHPHGGGEGRTSGGRHPVSPWGKSTKGKRTRSNKATDKFIMHTRHQRKK) form a disordered region.

It belongs to the universal ribosomal protein uL2 family. In terms of assembly, part of the 50S ribosomal subunit. Forms a bridge to the 30S subunit in the 70S ribosome.

Its function is as follows. One of the primary rRNA binding proteins. Required for association of the 30S and 50S subunits to form the 70S ribosome, for tRNA binding and peptide bond formation. It has been suggested to have peptidyltransferase activity; this is somewhat controversial. Makes several contacts with the 16S rRNA in the 70S ribosome. The chain is Large ribosomal subunit protein uL2 from Bartonella quintana (strain Toulouse) (Rochalimaea quintana).